Reading from the N-terminus, the 323-residue chain is NADH-cytochrome b5 reductase 2 (323 aa).

The helical transmembrane segment at 32 to 48 (LAPIYLGVGLIGLGVGL) threads the bilayer. The region spanning 72–177 (QGWVDLKLAQ…KGPIPKYPWE (106 aa)) is the FAD-binding FR-type domain. 180–215 (KHKHICLIAGGTGITPMYQLARKIFKDPEDQTKVTL) is an FAD binding site.

It belongs to the flavoprotein pyridine nucleotide cytochrome reductase family. FAD serves as cofactor.

It localises to the mitochondrion outer membrane. It catalyses the reaction 2 Fe(III)-[cytochrome b5] + NADH = 2 Fe(II)-[cytochrome b5] + NAD(+) + H(+). Functionally, may mediate the reduction of outer membrane cytochrome b5. The sequence is that of NADH-cytochrome b5 reductase 2 (mcr1) from Aspergillus fumigatus (strain ATCC MYA-4609 / CBS 101355 / FGSC A1100 / Af293) (Neosartorya fumigata).